A 148-amino-acid polypeptide reads, in one-letter code: Endoribonuclease YbeY (148 aa).

3 residues coordinate Zn(2+): His113, His117, and His123.

This sequence belongs to the endoribonuclease YbeY family. The cofactor is Zn(2+).

It is found in the cytoplasm. In terms of biological role, single strand-specific metallo-endoribonuclease involved in late-stage 70S ribosome quality control and in maturation of the 3' terminus of the 16S rRNA. In Borrelia duttonii (strain Ly), this protein is Endoribonuclease YbeY.